We begin with the raw amino-acid sequence, 235 residues long: Sperm annulus positionning complex subunit Chibby3 (235 aa).

A disordered region spans residues 1-41 (MADSKMKWGQAWDSSLGTATTSSSSATGSPSPFQNIRVPDT). Low complexity predominate over residues 14-32 (SSLGTATTSSSSATGSPSP). The segment at 167-181 (LLEENNYLKLQQELL) is leucine-zipper; mediates homodimerization.

It belongs to the chibby family. In terms of assembly, homodimer. Interacts with CIBAR1 (via BAR-like domain); both proteins form a ninefold symmetric structure at the flagellar base; are recruited to the annulus in a mutually dependent manner and regulate annulus positionning. As to expression, testis-specific.

The protein resides in the cell projection. Its subcellular location is the cilium. It localises to the flagellum. Its function is as follows. Plays a key role in the correct positioning of the annulus, a septin-based ring strucure in the sperm flagellum, serving both as a physical barrier and a membrane diffusion barrier that separates the midpiece (MP) from the principal piece (PP). This positioning is essential for proper sperm motility and function. Interacts with CIBAR1 to form a complex which localizes to the curved membrane region of the flagellar pocket. By doing so, may provide stability and rigidity to the periannular membrane to prevent membrane deformation. This function is crucial for halting annulus migration at the proximal end of the fibrous sheath-containing PP. The protein is Sperm annulus positionning complex subunit Chibby3 (Cby3) of Mus musculus (Mouse).